Consider the following 265-residue polypeptide: Putative hydro-lyase PA2116 (265 aa).

This sequence belongs to the D-glutamate cyclase family.

This is Putative hydro-lyase PA2116 from Pseudomonas aeruginosa (strain ATCC 15692 / DSM 22644 / CIP 104116 / JCM 14847 / LMG 12228 / 1C / PRS 101 / PAO1).